A 140-amino-acid polypeptide reads, in one-letter code: Chorion class A protein Ld2/Ld41 (140 aa).

The signal sequence occupies residues 1–21 (MNSFALLLVCIQACLVQSVFS).

The protein belongs to the chorion protein family.

Its function is as follows. This protein is one of many from the eggshell of the gypsy moth. In Lymantria dispar (Gypsy moth), this protein is Chorion class A protein Ld2/Ld41.